The sequence spans 247 residues: MSQSNSDDSASSSTQQAGDGQDDVQQNIVWHAHTVSREDRESKLGQRGVVVWFTGLSGCGKSTIANELDRLLIDRGATCTLLDGDNVRHGLCAPPSVLKEEHGEDFAGRFGLGFGPTDREENIRRIGAVTELFASAGVIVLAAFVSPYQRDRDRVRNTIESSGRAGDFLEVFVDTPLEICKQRDPKGLYQKAIAGEIKNFTGISDPYDAPPSPEIHLKWREGQTPHDQASEIIREMEKRGVLGPAKG.

The disordered stretch occupies residues 1–24 (MSQSNSDDSASSSTQQAGDGQDDV). 55–62 (GLSGCGKS) is an ATP binding site. Catalysis depends on Ser146, which acts as the Phosphoserine intermediate.

The protein belongs to the APS kinase family.

The catalysed reaction is adenosine 5'-phosphosulfate + ATP = 3'-phosphoadenylyl sulfate + ADP + H(+). The protein operates within sulfur metabolism; hydrogen sulfide biosynthesis; sulfite from sulfate: step 2/3. Catalyzes the synthesis of activated sulfate. This Rhodopirellula baltica (strain DSM 10527 / NCIMB 13988 / SH1) protein is Adenylyl-sulfate kinase.